Consider the following 70-residue polypeptide: Conotoxin Lt11.2 (70 aa).

A signal peptide spans 1–26; it reads MMFRLTSVSCFLLFIVFLNLVVLTNA. Disulfide bonds link Cys-27/Cys-41, Cys-34/Cys-46, Cys-40/Cys-50, and Cys-45/Cys-54. Pro-57 is modified (proline amide). Positions 61–70 are excised as a propeptide; sequence EKLQEFFRQR.

This sequence belongs to the conotoxin I2 superfamily. As to expression, expressed by the venom duct.

The protein resides in the secreted. The sequence is that of Conotoxin Lt11.2 from Conus litteratus (Lettered cone).